The chain runs to 426 residues: 3-isopropylmalate dehydratase large subunit (426 aa).

Positions 307, 367, and 370 each coordinate [4Fe-4S] cluster.

It belongs to the aconitase/IPM isomerase family. LeuC type 2 subfamily. As to quaternary structure, heterodimer of LeuC and LeuD. [4Fe-4S] cluster serves as cofactor.

It carries out the reaction (2R,3S)-3-isopropylmalate = (2S)-2-isopropylmalate. It functions in the pathway amino-acid biosynthesis; L-leucine biosynthesis; L-leucine from 3-methyl-2-oxobutanoate: step 2/4. Catalyzes the isomerization between 2-isopropylmalate and 3-isopropylmalate, via the formation of 2-isopropylmaleate. The protein is 3-isopropylmalate dehydratase large subunit of Sulfurovum sp. (strain NBC37-1).